A 297-amino-acid polypeptide reads, in one-letter code: Large ribosomal subunit protein uL10 (297 aa).

This sequence belongs to the universal ribosomal protein uL10 family. Part of the 50S ribosomal subunit. Forms part of the ribosomal stalk which helps the ribosome interact with GTP-bound translation factors. Forms a heptameric L10(L12)2(L12)2(L12)2 complex, where L10 forms an elongated spine to which the L12 dimers bind in a sequential fashion.

Forms part of the ribosomal stalk, playing a central role in the interaction of the ribosome with GTP-bound translation factors. The chain is Large ribosomal subunit protein uL10 from Methanococcus voltae.